The following is a 142-amino-acid chain: Ribosome maturation factor RimP (142 aa).

Belongs to the RimP family.

The protein resides in the cytoplasm. Functionally, required for maturation of 30S ribosomal subunits. This is Ribosome maturation factor RimP from Wolinella succinogenes (strain ATCC 29543 / DSM 1740 / CCUG 13145 / JCM 31913 / LMG 7466 / NCTC 11488 / FDC 602W) (Vibrio succinogenes).